The sequence spans 312 residues: Glyoxylate/hydroxypyruvate reductase A (312 aa).

Residue Arg227 is part of the active site. His275 functions as the Proton donor in the catalytic mechanism.

This sequence belongs to the D-isomer specific 2-hydroxyacid dehydrogenase family. GhrA subfamily.

The protein resides in the cytoplasm. The catalysed reaction is glycolate + NADP(+) = glyoxylate + NADPH + H(+). It carries out the reaction (R)-glycerate + NAD(+) = 3-hydroxypyruvate + NADH + H(+). The enzyme catalyses (R)-glycerate + NADP(+) = 3-hydroxypyruvate + NADPH + H(+). Its function is as follows. Catalyzes the NADPH-dependent reduction of glyoxylate and hydroxypyruvate into glycolate and glycerate, respectively. The chain is Glyoxylate/hydroxypyruvate reductase A from Escherichia fergusonii (strain ATCC 35469 / DSM 13698 / CCUG 18766 / IAM 14443 / JCM 21226 / LMG 7866 / NBRC 102419 / NCTC 12128 / CDC 0568-73).